The primary structure comprises 714 residues: Palmitoyltransferase ZDHHC5 (714 aa).

The Cytoplasmic portion of the chain corresponds to 1–13 (MPAESAKRFKPSK). Residues 14–34 (YVPVSAAAIFLVGATTLFFAF) traverse the membrane as a helical segment. Over 35-52 (TCPGLSLSVSPAVPVYNA) the chain is Extracellular. A helical membrane pass occupies residues 53 to 73 (VVFLFVLANFSMATFMDPGVF). Residues 74 to 148 (PRAEEDEDKE…NCIGRRNYRY (75 aa)) are Cytoplasmic-facing. Tyr-91 is modified (phosphotyrosine). The DHHC domain maps to 104 to 154 (KWCATCRFYRPPRCSHCSVCDNCVEEFDHHCPWVNNCIGRRNYRYFFLFLL). The active-site S-palmitoyl cysteine intermediate is Cys-134. Residues 149–169 (FFLFLLSLTAHITGVFGFGLL) traverse the membrane as a helical segment. The Extracellular segment spans residues 170–191 (YVLYHMEELSGVRTAVTMAVMC). Residues 192-212 (VAGLFFIPVAGLTGFHVVLVA) traverse the membrane as a helical segment. The Cytoplasmic segment spans residues 213 to 714 (RGRTTNEQVT…VGGTTYEISV (502 aa)). Ser-247 carries the post-translational modification Phosphoserine. The segment at 289-714 (GELRRTKSKG…VGGTTYEISV (426 aa)) is disordered. Thr-294 carries the post-translational modification Phosphothreonine. Ser-296 and Ser-299 each carry phosphoserine. Thr-303 is modified (phosphothreonine). Residue Ser-345 is modified to Phosphoserine. Residues Thr-348 and Thr-350 each carry the phosphothreonine modification. Positions 359 to 373 (SSSSASAAMPHSSSA) are enriched in low complexity. Residues Ser-380, Ser-398, Ser-406, and Ser-409 each carry the phosphoserine modification. Residues 388–398 (AESSRQPSYRS) show a composition bias toward polar residues. Thr-411 carries the post-translational modification Phosphothreonine. The span at 422–432 (SSGSRSSSLKS) shows a compositional bias: low complexity. Residues Ser-425, Ser-429, and Ser-432 each carry the phosphoserine modification. Residue Thr-436 is modified to Phosphothreonine. Positions 445–478 (SIRSEGTTSTSYKSLANQTRNGSLSYDSLLTPSD) are enriched in polar residues. 2 positions are modified to phosphoserine: Ser-529 and Ser-554. Arg-616 bears the Omega-N-methylarginine mark. Ser-620 is modified (phosphoserine). Thr-658 is subject to Phosphothreonine. A compositionally biased stretch (polar residues) spans 667–678 (TAYSKSNGQPKS). Pro residues predominate over residues 683-692 (PPGPGQPPLS). Ser-693 is subject to Phosphoserine. Residue Arg-696 is modified to Omega-N-methylarginine.

It belongs to the DHHC palmitoyltransferase family. ERF2/ZDHHC9 subfamily. Post-translationally, phosphorylation regulates association with endocytic proteins and its subcellular localization. Phosphorylation by LYN during fatty acid uptake leads to inactivation of the activity. Autopalmitoylated. Palmitoylation of the C-terminal tail regulates stimulation-dependent plasma membrane motility.

The protein resides in the cell membrane. The enzyme catalyses L-cysteinyl-[protein] + hexadecanoyl-CoA = S-hexadecanoyl-L-cysteinyl-[protein] + CoA. In terms of biological role, palmitoyltransferase that catalyzes the addition of palmitate onto various protein substrates such as CTNND2, CD36, GSDMD, NLRP3, NOD1, NOD2, STAT3 and S1PR1 thus plays a role in various biological processes including cell adhesion, inflammation, fatty acid uptake, bacterial sensing or cardiac functions. Plays an important role in the regulation of synapse efficacy by mediating palmitoylation of delta-catenin/CTNND2, thereby increasing synaptic delivery and surface stabilization of alpha-amino-3-hydroxy-5-methyl-4-isoxazole propionic acid receptors (AMPARs). Under basal conditions, remains at the synaptic membrane through FYN-mediated phosphorylation that prevents association with endocytic proteins. Neuronal activity enhances the internalization and trafficking of DHHC5 from spines to dendritic shafts where it palmitoylates delta-catenin/CTNND2. Regulates cell adhesion at the plasma membrane by palmitoylating GOLGA7B and DSG2. Plays a role in innate immune response by mediating the palmitoylation of NOD1 and NOD2 and their proper recruitment to the bacterial entry site and phagosomes. Also participates in fatty acid uptake by palmitoylating CD36 and thereby targeting it to the plasma membrane. Upon binding of fatty acids to CD36, gets phosphorylated by LYN leading to inactivation and subsequent CD36 caveolar endocytosis. Controls oligodendrocyte development by catalyzing STAT3 palmitoylation. Acts as a regulator of inflammatory response by mediating palmitoylation of NLRP3 and GSDMD. Palmitoylates NLRP3 to promote inflammasome assembly and activation. Activates pyroptosis by catalyzing palmitoylation of gasdermin-D (GSDMD), thereby promoting membrane translocation and pore formation of GSDMD. In Bos taurus (Bovine), this protein is Palmitoyltransferase ZDHHC5 (ZDHHC5).